Consider the following 296-residue polypeptide: Methylsterol monooxygenase erg25B (296 aa).

The next 3 helical transmembrane spans lie at 50-70, 98-118, and 125-145; these read IMSF…WILI, FVLL…HPMA, and TSVP…FFVL. The Fatty acid hydroxylase domain occupies 140 to 276; that stretch reads AIFFVLEDTW…FRWWDYLLDT (137 aa). The Histidine box-1 motif lies at 154-158; that stretch reads HRALH. The Histidine box-2 motif lies at 167-171; sequence HKIHH. A helical membrane pass occupies residues 201-221; that stretch reads ILWCALTGDLHIFTMYVWIVL. Residues 251–257 carry the Histidine box-3 motif; the sequence is HHDLHHE.

This sequence belongs to the sterol desaturase family. Fe cation serves as cofactor.

It is found in the endoplasmic reticulum membrane. The protein operates within steroid metabolism; ergosterol biosynthesis. Functionally, sterol-C4-methyl oxidase; part of the third module of ergosterol biosynthesis pathway that includes the late steps of the pathway. Erg25B is a catalytic component of the C-4 demethylation complex that catalyzes the conversion of 4,4-dimethylfecosterol into fecosterol via 4-methylfecosterol. The third module or late pathway involves the ergosterol synthesis itself through consecutive reactions that mainly occur in the endoplasmic reticulum (ER) membrane. Firstly, the squalene synthase erg9 catalyzes the condensation of 2 farnesyl pyrophosphate moieties to form squalene, which is the precursor of all steroids. Squalene synthase is crucial for balancing the incorporation of farnesyl diphosphate (FPP) into sterol and nonsterol isoprene synthesis. Secondly, squalene is converted into lanosterol by the consecutive action of the squalene epoxidase erg1 and the lanosterol synthase erg7. Then, the delta(24)-sterol C-methyltransferase erg6 methylates lanosterol at C-24 to produce eburicol. Eburicol is the substrate of the sterol 14-alpha demethylase encoded by cyp51A and cyp51B, to yield 4,4,24-trimethyl ergosta-8,14,24(28)-trienol. The C-14 reductase erg24 then reduces the C14=C15 double bond which leads to 4,4-dimethylfecosterol. A sequence of further demethylations at C-4, involving the C-4 demethylation complex containing the C-4 methylsterol oxidases erg25A or erg25B, the sterol-4-alpha-carboxylate 3-dehydrogenase erg26 and the 3-keto-steroid reductase erg27, leads to the production of fecosterol via 4-methylfecosterol. The C-8 sterol isomerase erg2 then catalyzes the reaction which results in unsaturation at C-7 in the B ring of sterols and thus converts fecosterol to episterol. The sterol-C5-desaturase erg3B then catalyzes the introduction of a C-5 double bond in the B ring to produce 5-dehydroepisterol. The 2 other sterol-C5-desaturases, erg3A and erg3C, seem to be less important in ergosterol biosynthesis. The C-22 sterol desaturase erg5 further converts 5-dehydroepisterol into ergosta-5,7,22,24(28)-tetraen-3beta-ol by forming the C-22(23) double bond in the sterol side chain. Finally, ergosta-5,7,22,24(28)-tetraen-3beta-ol is substrate of the C-24(28) sterol reductases erg4A and erg4B to produce ergosterol. Possible alternative sterol biosynthetic pathways might exist from fecosterol to ergosterol, depending on the activities of the erg3 isoforms. This Aspergillus fumigatus (strain ATCC MYA-4609 / CBS 101355 / FGSC A1100 / Af293) (Neosartorya fumigata) protein is Methylsterol monooxygenase erg25B.